The following is a 1130-amino-acid chain: Integrin alpha-6 (1130 aa).

An N-terminal signal peptide occupies residues 1 to 23; that stretch reads MAAAGQLCLLYLSAGLLSRLGAA. At 24 to 1050 the chain is on the extracellular side; the sequence is FNLDTREDNV…FPSKTVAQYS (1027 aa). FG-GAP repeat units lie at residues 30 to 95, 101 to 166, 176 to 229, 283 to 339, 340 to 402, 403 to 458, and 459 to 518; these read EDNV…GPCT, NDAD…IEDD, DGRL…FFDM, EQPD…KSAH, LLPE…RWNN, VKPI…GINT, and KPTQ…VTPN. Asn78 is a glycosylation site (N-linked (GlcNAc...) asparagine). Disulfide bonds link Cys86–Cys94, Cys131–Cys154, and Cys175–Cys188. N-linked (GlcNAc...) asparagine glycans are attached at residues Asn223 and Asn323. 4 residues coordinate Ca(2+): Asp363, Asn365, Asp367, and Asp371. Asn409 is a glycosylation site (N-linked (GlcNAc...) asparagine). Residues Asp425, Asn427, Asp429, Tyr431, Asp433, Asp480, Asp482, Asn484, Tyr486, and Asp488 each contribute to the Ca(2+) site. Cystine bridges form between Cys528/Cys535, Cys541/Cys601, Cys665/Cys671, and Cys765/Cys776. Residues Asn770, Asn787, Asn930, and Asn966 are each glycosylated (N-linked (GlcNAc...) asparagine). 2 disulfide bridges follow: Cys920–Cys967 and Cys973–Cys978. An N-linked (GlcNAc...) asparagine glycan is attached at Asn997. Residues 1051–1076 traverse the membrane as a helical segment; the sequence is GVPWWIILVAILAGILMLALLVFILW. Phosphoserine is present on residues Val1059 and Gly1064. An interaction with HPS5 region spans residues 1077–1083; sequence KCGFFKR. Residues 1077–1130 lie on the Cytoplasmic side of the membrane; the sequence is KCGFFKRSRYDDSVPRYHAVRIRKEEREIKDEKYIDNLEKKQWITKWNENESYS. The S-palmitoyl cysteine; by DHHC3 moiety is linked to residue Cys1078. Residues 1079–1083 carry the GFFKR motif motif; sequence GFFKR. The residue at position 1103 (Arg1103) is a Phosphoserine.

Belongs to the integrin alpha chain family. In terms of assembly, heterodimer of an alpha and a beta subunit. The alpha subunit is composed of a heavy and a light chain linked by a disulfide bond. Alpha-6 associates with either beta-1 (ITGB1) or beta-4 (ITGB4) to form ITGA6:ITGB1 and ITGA6:ITGB4, respectively. ITGA6:ITGB1 is found in a complex with CD9; interaction takes place in oocytes and is involved in sperm-egg fusion. ITGA6:ITGB4 is found in a ternary complex with NRG1 and ERBB3. ITGA6:ITGB4 is found in a ternary complex with IGF1 and IGF1R. ITGA6:ITGB4 interacts with IGF2. Interacts with ADAM9. Interacts with RAB21. Interacts with MDK. ITGA6:ITGB1 interacts with MDK; this interaction mediates MDK-induced neurite outgrowth. Interacts with CD82; this interaction down-regulates ITGA6-mediated cell adhesion. In terms of processing, isoforms containing segment A, but not segment B, are the major targets for PMA-induced phosphorylation. Phosphorylation occurs on 'Ser-1103' of isoform alpha-6X1X2A. Phosphorylation is not required for the induction of integrin alpha-6A/beta-1 high affinity but may reduce the affinity for ligand. Undergoes PLAU-mediated cleavage at residues Arg-634-635-Arg in a time-dependent manner to produce processed integrin alpha-6 (alpha6p). Production of alpha6p enhances prostate cancer cell invasion and migration. Post-translationally, palmitoylation by DHHC3 enhances stability and cell surface expression. Integrin alpha-6/beta-4 is predominantly expressed by epithelia. Isoforms containing segment X1 are ubiquitously expressed. Isoforms containing segment X1X2 are expressed in heart, kidney, placenta, colon, duodenum, myoblasts and myotubes, and in a limited number of cell lines; they are always coexpressed with the ubiquitous isoform containing segment X1. In some tissues (e.g. Salivary gland), isoforms containing cytoplasmic segment A and isoforms containing segment B are detected while in others, only isoforms containing one cytoplasmic segment are found (segment A in epidermis and segment B in kidney). Processed integrin alpha-6: Expressed at low levels in normal prostate tissue with elevated levels in prostate cancer tissue (at protein level).

It is found in the cell membrane. Functionally, integrin alpha-6/beta-1 (ITGA6:ITGB1) is a receptor for laminin on platelets. Integrin alpha-6/beta-1 (ITGA6:ITGB1) is present in oocytes and is involved in sperm-egg fusion. Integrin alpha-6/beta-4 (ITGA6:ITGB4) is a receptor for laminin in epithelial cells and it plays a critical structural role in the hemidesmosome. ITGA6:ITGB4 binds to NRG1 (via EGF domain) and this binding is essential for NRG1-ERBB signaling. ITGA6:ITGB4 binds to IGF1 and this binding is essential for IGF1 signaling. ITGA6:ITGB4 binds to IGF2 and this binding is essential for IGF2 signaling. In Homo sapiens (Human), this protein is Integrin alpha-6 (ITGA6).